We begin with the raw amino-acid sequence, 37 residues long: Large ribosomal subunit protein bL36 (37 aa).

It belongs to the bacterial ribosomal protein bL36 family.

This is Large ribosomal subunit protein bL36 from Marinobacter nauticus (strain ATCC 700491 / DSM 11845 / VT8) (Marinobacter aquaeolei).